The primary structure comprises 265 residues: Chanoclavine-I dehydrogenase easD (265 aa).

Residues 1–20 (MSFVSSKIFAITGGASGIGA) form the signal peptide. The NADP(+) site is built by isoleucine 18, aspartate 66, arginine 132, tyrosine 169, lysine 173, and threonine 205. Tyrosine 169 (proton donor) is an active-site residue. The active-site Lowers pKa of active site Tyr is lysine 173.

It belongs to the short-chain dehydrogenases/reductases (SDR) family. As to quaternary structure, homotetramer.

It carries out the reaction chanoclavine-I + NAD(+) = chanoclavine-I aldehyde + NADH + H(+). Its pathway is alkaloid biosynthesis; ergot alkaloid biosynthesis. In terms of biological role, chanoclavine-I dehydrogenase; part of the gene cluster that mediates the biosynthesis of fungal ergot alkaloid. DmaW catalyzes the first step of ergot alkaloid biosynthesis by condensing dimethylallyl diphosphate (DMAP) and tryptophan to form 4-dimethylallyl-L-tryptophan. The second step is catalyzed by the methyltransferase easF that methylates 4-dimethylallyl-L-tryptophan in the presence of S-adenosyl-L-methionine, resulting in the formation of 4-dimethylallyl-L-abrine. The catalase easC and the FAD-dependent oxidoreductase easE then transform 4-dimethylallyl-L-abrine to chanoclavine-I which is further oxidized by easD in the presence of NAD(+), resulting in the formation of chanoclavine-I aldehyde. Chanoclavine-I aldehyde is the precursor of ergoamides and ergopeptines in Clavicipitaceae, and clavine-type alcaloids such as fumiclavine in Trichocomaceae. However, the metabolites downstream of chanoclavine-I aldehyde in Arthrodermataceae have not been identified yet. The protein is Chanoclavine-I dehydrogenase easD of Trichophyton verrucosum (strain HKI 0517).